The primary structure comprises 44 residues: Thymosin beta-4 (44 aa).

Composition is skewed to basic and acidic residues over residues 1-25 (MSDK…ETQE) and 33-44 (ETIEQEKQTSES). The disordered stretch occupies residues 1–44 (MSDKPDMAEIEKFDKAKLKKTETQEKNPLPSKETIEQEKQTSES). An N-acetylserine modification is found at Ser2.

Belongs to the thymosin beta family. As to expression, spleen, kidney, heart, and oocytes.

The protein localises to the cytoplasm. It is found in the cytoskeleton. Functionally, plays an important role in the organization of the cytoskeleton. Binds to and sequesters actin monomers (G actin) and therefore inhibits actin polymerization. The sequence is that of Thymosin beta-4 (tmsb4) from Xenopus laevis (African clawed frog).